Reading from the N-terminus, the 515-residue chain is Protein disulfide-isomerase (515 aa).

Residues 1 to 20 (MRSFAPWLVSLLGASAVVAA) form the signal peptide. Thioredoxin domains lie at 21 to 132 (ADTE…QSLP) and 339 to 470 (VLDG…ENGK). Residues cysteine 54, cysteine 57, cysteine 389, and cysteine 392 each act as nucleophile in the active site. Disulfide bonds link cysteine 54–cysteine 57 and cysteine 389–cysteine 392. Positions 478–515 (VASEETQEGGDVTEAAPSATEAETPAATDDEKAEHDEL) are disordered. Over residues 490 to 504 (TEAAPSATEAETPAA) the composition is skewed to low complexity. Over residues 506-515 (DDEKAEHDEL) the composition is skewed to basic and acidic residues. The short motif at 512-515 (HDEL) is the Prevents secretion from ER element.

It belongs to the protein disulfide isomerase family.

The protein resides in the endoplasmic reticulum lumen. It catalyses the reaction Catalyzes the rearrangement of -S-S- bonds in proteins.. Functionally, participates in the folding of proteins containing disulfide bonds, may be involved in glycosylation, prolyl hydroxylation and triglyceride transfer. The chain is Protein disulfide-isomerase (pdiA) from Aspergillus niger.